The primary structure comprises 233 residues: Glycerol-3-phosphate acyltransferase 5 (233 aa).

5 helical membrane-spanning segments follow: residues 3–23 (LVFI…MAYL), 69–89 (MILL…VGLF), 116–136 (LVMA…FGLF), 143–163 (VFLG…FFGI), and 168–188 (TISW…LMAP).

It belongs to the PlsY family. Probably interacts with PlsX.

The protein resides in the cell membrane. The catalysed reaction is an acyl phosphate + sn-glycerol 3-phosphate = a 1-acyl-sn-glycero-3-phosphate + phosphate. It functions in the pathway lipid metabolism; phospholipid metabolism. In terms of biological role, catalyzes the transfer of an acyl group from acyl-phosphate (acyl-PO(4)) to glycerol-3-phosphate (G3P) to form lysophosphatidic acid (LPA). This enzyme utilizes acyl-phosphate as fatty acyl donor, but not acyl-CoA or acyl-ACP. This is Glycerol-3-phosphate acyltransferase 5 from Dehalococcoides mccartyi (strain ATCC BAA-2266 / KCTC 15142 / 195) (Dehalococcoides ethenogenes (strain 195)).